A 115-amino-acid chain; its full sequence is UPF0102 protein Kole_1919 (115 aa).

This sequence belongs to the UPF0102 family.

This chain is UPF0102 protein Kole_1919, found in Kosmotoga olearia (strain ATCC BAA-1733 / DSM 21960 / TBF 19.5.1).